The sequence spans 219 residues: uncharacterized protein (219 aa).

A signal peptide spans 1-17 (MFKKIIILFLGIFLLSS). Cysteine 18 carries the N-palmitoyl cysteine lipid modification. Cysteine 18 is lipidated: S-diacylglycerol cysteine. The interval 110–136 (KAESNATQSNNDMTLSKANKKVRKDDS) is disordered. The segment covering 112–126 (ESNATQSNNDMTLSK) has biased composition (polar residues). Positions 137 to 165 (YKEKKIEEELNQIKAMLRETKRDITKYTC) form a coiled coil.

The protein localises to the cell membrane. This is an uncharacterized protein from Rickettsia prowazekii (strain Madrid E).